A 360-amino-acid polypeptide reads, in one-letter code: CLIP domain-containing serine protease B4 (360 aa).

The first 24 residues, 1–24, serve as a signal peptide directing secretion; sequence MIGNRVINLLIVATLALAGQTVLA. The Clip domain maps to 30 to 83; sequence DCVNPVGEAGKCVLFRECQPLVDIYNKPVNTPDDTQFLTESRCGLYERKTLVCC. 4 cysteine pairs are disulfide-bonded: cysteine 31/cysteine 82, cysteine 41/cysteine 72, cysteine 47/cysteine 83, and cysteine 138/cysteine 154. The region spanning 108 to 360 is the Peptidase S1 domain; that stretch reads VIGGQPTKID…YVDWIKDNIY (253 aa). Residues histidine 153 and aspartate 213 each act as charge relay system in the active site. The N-linked (GlcNAc...) asparagine glycan is linked to asparagine 224. Disulfide bonds link cysteine 280–cysteine 297 and cysteine 307–cysteine 336. The Charge relay system role is filled by serine 311.

This sequence belongs to the peptidase S1 family. CLIP subfamily. Interacts with SRPN2 in the hemolymph of immune-challenged female mosquitoes; the interaction results in CLIPB4 inhibition. As to expression, in females, expressed in fat body, cuticle, thorax and ovaries.

It localises to the secreted. Its function is as follows. Serine protease which plays a role in the innate immune response against protozoan and bacterial pathogens, such as Plasmodium bergei, Staphylococcus aureus, Micrococcus luteus and Escherichia coli, by activating the melanization cascade. Cleaves and activates CLIPB8. In the resistant strain L3-5, involved in the melanization of killed parasite P.berghei ookinetes which results in their clearance. In the susceptible strain G3, appears to be dispensable for ookinete elimination which occurs by lysis. The sequence is that of CLIP domain-containing serine protease B4 from Anopheles gambiae (African malaria mosquito).